A 221-amino-acid polypeptide reads, in one-letter code: Flagellar L-ring protein 1 (221 aa).

The N-terminal stretch at 1–16 (MKRFLILTPMVLALCG) is a signal peptide. The N-palmitoyl cysteine moiety is linked to residue C17. C17 is lipidated: S-diacylglycerol cysteine.

This sequence belongs to the FlgH family. As to quaternary structure, the basal body constitutes a major portion of the flagellar organelle and consists of four rings (L,P,S, and M) mounted on a central rod.

It localises to the cell outer membrane. It is found in the bacterial flagellum basal body. In terms of biological role, assembles around the rod to form the L-ring and probably protects the motor/basal body from shearing forces during rotation. The sequence is that of Flagellar L-ring protein 1 from Yersinia pestis.